The sequence spans 38 residues: Large ribosomal subunit protein bL36 (38 aa).

The protein belongs to the bacterial ribosomal protein bL36 family.

The sequence is that of Large ribosomal subunit protein bL36 from Gemmatimonas aurantiaca (strain DSM 14586 / JCM 11422 / NBRC 100505 / T-27).